A 621-amino-acid chain; its full sequence is DNA mismatch repair protein MutL (621 aa).

The protein belongs to the DNA mismatch repair MutL/HexB family.

Functionally, this protein is involved in the repair of mismatches in DNA. It is required for dam-dependent methyl-directed DNA mismatch repair. May act as a 'molecular matchmaker', a protein that promotes the formation of a stable complex between two or more DNA-binding proteins in an ATP-dependent manner without itself being part of a final effector complex. This chain is DNA mismatch repair protein MutL, found in Xylella fastidiosa (strain M12).